Reading from the N-terminus, the 373-residue chain is Ribosomal RNA small subunit methyltransferase H (373 aa).

S-adenosyl-L-methionine-binding positions include 92–94, aspartate 111, tyrosine 138, aspartate 159, and glutamine 166; that span reads GGH. 2 stretches are compositionally biased toward basic and acidic residues: residues 343–355 and 363–373; these read AERA…ERNP and RALEKVGGRGS. The segment at 343–373 is disordered; the sequence is AERADEQEIERNPRSAPVRLRALEKVGGRGS.

It belongs to the methyltransferase superfamily. RsmH family.

It localises to the cytoplasm. The catalysed reaction is cytidine(1402) in 16S rRNA + S-adenosyl-L-methionine = N(4)-methylcytidine(1402) in 16S rRNA + S-adenosyl-L-homocysteine + H(+). Functionally, specifically methylates the N4 position of cytidine in position 1402 (C1402) of 16S rRNA. This Mycolicibacterium smegmatis (strain ATCC 700084 / mc(2)155) (Mycobacterium smegmatis) protein is Ribosomal RNA small subunit methyltransferase H.